The chain runs to 302 residues: MNQKGRGLEILINEKQDGQWLFSVLKTALKASKPVIQDWMSHQQIKVNHESVLNNMIVKKGDRVFIDLQESEASSVIPEYGELDILFEDNHMLIINKPAGIATHPNEDGQTGTLANLIAYHYQINGETCKVRHVHRLDQDTSGAIVFAKHRLAHAILDQQLEKKTLKRTYTAIAEGKLRTKKGTINSPIGRDRSHPTRRRVSPGGQTAVTHFKVMASNAKERLSLVELELETGRTHQIRVHLASLGHPLTGDSLYGGGSKLLNRQALHANKVQAVHPITDELIVAEAPFPADMKNLCRTYFS.

In terms of domain architecture, S4 RNA-binding spans 19–90 (QWLFSVLKTA…GELDILFEDN (72 aa)). Aspartate 138 is an active-site residue. A disordered region spans residues 182-205 (KGTINSPIGRDRSHPTRRRVSPGG).

Belongs to the pseudouridine synthase RluA family.

The catalysed reaction is a uridine in RNA = a pseudouridine in RNA. This is an uncharacterized protein from Bacillus subtilis (strain 168).